The sequence spans 1124 residues: Anillin (1124 aa).

Position 1 is an N-acetylmethionine (M1). The span at 1–25 (MDPFTEKLLERTRARRENLQRKMAE) shows a compositional bias: basic and acidic residues. The interval 1–45 (MDPFTEKLLERTRARRENLQRKMAERPTAAPRSMTHAKRARQPLS) is required for ubiquitination. 2 disordered regions span residues 1–113 (MDPF…ADTI) and 136–196 (ATAA…ATPV). The tract at residues 1–155 (MDPFTEKLLE…MQKLAEQRRR (155 aa)) is interaction with CD2AP. The interval 1 to 230 (MDPFTEKLLE…AKQNSVQEQP (230 aa)) is nuclear localization. A phosphoserine mark is found at S54 and S72. Polar residues predominate over residues 77–96 (VEVSNLENKQPVESTSAKSC). 2 positions are modified to phosphoserine: S97 and S102. The span at 97–108 (SPSPVSPQVQPQ) shows a compositional bias: low complexity. Residues 148 to 158 (KLAEQRRRWDN) show a composition bias toward basic and acidic residues. S172 and S182 each carry phosphoserine. T194 carries the phosphothreonine modification. 2 positions are modified to phosphoserine: S225 and S252. The tract at residues 231 to 676 (GTACLSKFSS…RDLLYSIDAY (446 aa)) is interaction with F-actin. Residue K254 forms a Glycyl lysine isopeptide (Lys-Gly) (interchain with G-Cter in SUMO1) linkage. S261 carries the phosphoserine modification. Residues 294 to 305 (TSPVKSTTSITD) are compositionally biased toward polar residues. The segment at 294–328 (TSPVKSTTSITDAKSCEGQNPELLPKTPISPLKTG) is disordered. T320 is modified (phosphothreonine). Residues S323 and S339 each carry the phosphoserine modification. Phosphothreonine is present on T364. Residue K371 is modified to N6-acetyllysine. A compositionally biased stretch (basic and acidic residues) spans 380–389 (RCQEHSKESP). The tract at residues 380-399 (RCQEHSKESPARSTPHRTPI) is disordered. Phosphothreonine occurs at positions 397 and 401. S417, S419, S449, S485, S518, S553, and S561 each carry phosphoserine. Residues 569–604 (FSDVLEEGELDMEKSQEEMDQALAESSEEQEDALNI) adopt a coiled-coil conformation. Disordered stretches follow at residues 579 to 600 (DMEK…EQED) and 625 to 664 (LVST…SLGS). Basic and acidic residues-rich tracts occupy residues 631-644 (LELK…ESPK) and 654-664 (PRAESGDSLGS). Residues S637, S642, S658, S661, and S664 each carry the phosphoserine modification. Y671 is modified (phosphotyrosine). Phosphoserine occurs at positions 678, 688, 792, and 927. Positions 730-1124 (QQTVIYQASQ…DACYKPIGKP (395 aa)) are localization to the cleavage furrow. A PH domain is found at 983 to 1107 (SVEERGFLTI…WMQKLNQVLV (125 aa)).

In terms of assembly, interacts with F-actin. Interacts with CD2AP. May interact with RHOA. Interacts with FZR1/CDH1 during mitotic exit. Post-translationally, phosphorylated during mitosis. In terms of processing, ubiquitinated, and this requires FZR1/CDH1. In terms of tissue distribution, ubiquitously expressed. Present at highest levels in the brain, at high levels in the placenta and testis, at intermediate levels in the intestine, ovary, skeletal muscle and thymus and at lower levels in heart, kidney, liver, lung, pancreas, prostate and spleen. In the kidney, it is widely expressed in tubules, but sparsely expressed in the glomerulus. Expression is significantly increased in renal biopsy specimens from idiopathic FSGS. Overexpressed in many tumor types including breast, colorectal, endometrial, hepatic, kidney, lung, ovarian and pancreatic tumors.

It is found in the nucleus. Its subcellular location is the cytoplasm. The protein resides in the cytoskeleton. It localises to the cell cortex. The protein localises to the cell projection. It is found in the bleb. Its function is as follows. Required for cytokinesis. Essential for the structural integrity of the cleavage furrow and for completion of cleavage furrow ingression. Plays a role in bleb assembly during metaphase and anaphase of mitosis. May play a significant role in podocyte cell migration. The sequence is that of Anillin (ANLN) from Homo sapiens (Human).